A 555-amino-acid polypeptide reads, in one-letter code: 2-succinyl-5-enolpyruvyl-6-hydroxy-3-cyclohexene-1-carboxylate synthase (555 aa).

This sequence belongs to the TPP enzyme family. MenD subfamily. Homodimer. Mg(2+) is required as a cofactor. Mn(2+) serves as cofactor. The cofactor is thiamine diphosphate.

It carries out the reaction isochorismate + 2-oxoglutarate + H(+) = 5-enolpyruvoyl-6-hydroxy-2-succinyl-cyclohex-3-ene-1-carboxylate + CO2. It participates in quinol/quinone metabolism; 1,4-dihydroxy-2-naphthoate biosynthesis; 1,4-dihydroxy-2-naphthoate from chorismate: step 2/7. Its pathway is quinol/quinone metabolism; menaquinone biosynthesis. In terms of biological role, catalyzes the thiamine diphosphate-dependent decarboxylation of 2-oxoglutarate and the subsequent addition of the resulting succinic semialdehyde-thiamine pyrophosphate anion to isochorismate to yield 2-succinyl-5-enolpyruvyl-6-hydroxy-3-cyclohexene-1-carboxylate (SEPHCHC). This chain is 2-succinyl-5-enolpyruvyl-6-hydroxy-3-cyclohexene-1-carboxylate synthase, found in Cronobacter sakazakii (strain ATCC BAA-894) (Enterobacter sakazakii).